The sequence spans 20 residues: Cicerin (20 aa).

The interval 1 to 20 (ARCENFADSYRQPPISSSQT) is disordered.

Its function is as follows. Has antifungal activity against B.cinerea, F.oxysporum and M.arachidicola. Inhibits cell-free translation in rabbit reticulocyte lysate system. This Cicer arietinum (Chickpea) protein is Cicerin.